Consider the following 101-residue polypeptide: Urease subunit beta (101 aa).

The protein belongs to the urease beta subunit family. In terms of assembly, heterotrimer of UreA (gamma), UreB (beta) and UreC (alpha) subunits. Three heterotrimers associate to form the active enzyme.

It is found in the cytoplasm. The enzyme catalyses urea + 2 H2O + H(+) = hydrogencarbonate + 2 NH4(+). It functions in the pathway nitrogen metabolism; urea degradation; CO(2) and NH(3) from urea (urease route): step 1/1. This chain is Urease subunit beta, found in Rhizobium johnstonii (strain DSM 114642 / LMG 32736 / 3841) (Rhizobium leguminosarum bv. viciae).